The following is a 168-amino-acid chain: tRNA-splicing endonuclease (168 aa).

Active-site residues include Y107, H114, and K145.

Belongs to the tRNA-intron endonuclease family. Archaeal short subfamily. As to quaternary structure, homotetramer; although the tetramer contains four active sites, only two participate in the cleavage. Therefore, it should be considered as a dimer of dimers.

The enzyme catalyses pretRNA = a 3'-half-tRNA molecule with a 5'-OH end + a 5'-half-tRNA molecule with a 2',3'-cyclic phosphate end + an intron with a 2',3'-cyclic phosphate and a 5'-hydroxyl terminus.. In terms of biological role, endonuclease that removes tRNA introns. Cleaves pre-tRNA at the 5'- and 3'-splice sites to release the intron. The products are an intron and two tRNA half-molecules bearing 2',3' cyclic phosphate and 5'-OH termini. Recognizes a pseudosymmetric substrate in which 2 bulged loops of 3 bases are separated by a stem of 4 bp. This chain is tRNA-splicing endonuclease, found in Thermococcus gammatolerans (strain DSM 15229 / JCM 11827 / EJ3).